Consider the following 65-residue polypeptide: Protein YSY6 (65 aa).

Residues 45-65 (LGILLFLLVGGGVLQLISYIL) traverse the membrane as a helical segment.

This sequence belongs to the RAMP4 family.

The protein localises to the membrane. Its subcellular location is the endoplasmic reticulum membrane. Functionally, interacts with target proteins during their translocation into the lumen of the endoplasmic reticulum. Protects unfolded target proteins against degradation during ER stress. May facilitate glycosylation of target proteins after termination of ER stress. This chain is Protein YSY6 (YSY6), found in Saccharomyces cerevisiae (strain ATCC 204508 / S288c) (Baker's yeast).